Consider the following 586-residue polypeptide: Asparagine synthetase [glutamine-hydrolyzing] 1 (586 aa).

The active-site For GATase activity is the C2. Positions C2–R185 constitute a Glutamine amidotransferase type-2 domain. Residues R50–V54, N75–E77, and D98 contribute to the L-glutamine site. Positions P193–P516 constitute an Asparagine synthetase domain. ATP-binding positions include L231, V267, and S341 to G342.

It catalyses the reaction L-aspartate + L-glutamine + ATP + H2O = L-asparagine + L-glutamate + AMP + diphosphate + H(+). It participates in amino-acid biosynthesis; L-asparagine biosynthesis; L-asparagine from L-aspartate (L-Gln route): step 1/1. This Lotus japonicus (Lotus corniculatus var. japonicus) protein is Asparagine synthetase [glutamine-hydrolyzing] 1 (AS1).